The sequence spans 617 residues: Threonine--tRNA ligase (617 aa).

The segment at 209–502 (DHRRLGKDLD…MTENYAGDFP (294 aa)) is catalytic. Zn(2+) is bound by residues Cys302, His353, and His479.

Belongs to the class-II aminoacyl-tRNA synthetase family. In terms of assembly, homodimer. Requires Zn(2+) as cofactor.

It is found in the cytoplasm. It catalyses the reaction tRNA(Thr) + L-threonine + ATP = L-threonyl-tRNA(Thr) + AMP + diphosphate + H(+). In terms of biological role, catalyzes the attachment of threonine to tRNA(Thr) in a two-step reaction: L-threonine is first activated by ATP to form Thr-AMP and then transferred to the acceptor end of tRNA(Thr). Also edits incorrectly charged L-seryl-tRNA(Thr). The polypeptide is Threonine--tRNA ligase (Synechococcus sp. (strain CC9311)).